The chain runs to 518 residues: Integrator complex subunit 14 (518 aa).

The VWFA domain occupies 2–204 (PTVVVMDVSL…KNVQSMFGKL (203 aa)). Residues S10, S12, and T86 each contribute to the Mg(2+) site. Residues 373–394 (SDAKENPYGDDDNKSPFPLQPK) are disordered. Basic and acidic residues predominate over residues 374–386 (DAKENPYGDDDNK).

Belongs to the Integrator subunit 14 family. Component of the Integrator complex, composed of core subunits INTS1, INTS2, INTS3, INTS4, INTS5, INTS6, INTS7, INTS8, INTS9/RC74, INTS10, INTS11/CPSF3L, INTS12, INTS13, INTS14 and INTS15. The core complex associates with protein phosphatase 2A subunits PPP2CA and PPP2R1A, to form the Integrator-PP2A (INTAC) complex. INTS14 is part of the tail subcomplex, composed of INTS10, INTS13, INTS14 and INTS15.

The protein localises to the nucleus. Component of the integrator complex, a multiprotein complex that terminates RNA polymerase II (Pol II) transcription in the promoter-proximal region of genes. The integrator complex provides a quality checkpoint during transcription elongation by driving premature transcription termination of transcripts that are unfavorably configured for transcriptional elongation: the complex terminates transcription by (1) catalyzing dephosphorylation of the C-terminal domain (CTD) of Pol II subunit POLR2A/RPB1 and SUPT5H/SPT5, (2) degrading the exiting nascent RNA transcript via endonuclease activity and (3) promoting the release of Pol II from bound DNA. The integrator complex is also involved in terminating the synthesis of non-coding Pol II transcripts, such as enhancer RNAs (eRNAs), small nuclear RNAs (snRNAs), telomerase RNAs and long non-coding RNAs (lncRNAs). Within the integrator complex, INTS14 is part of the integrator tail module that acts as a platform for the recruitment of transcription factors at promoters. In Gallus gallus (Chicken), this protein is Integrator complex subunit 14.